The primary structure comprises 811 residues: Lysine-specific histone demethylase 1 homolog 3 (811 aa).

The span at 1 to 10 shows a compositional bias: pro residues; that stretch reads MSDQPPPYTP. Residues 1–79 form a disordered region; sequence MSDQPPPYTP…PSAQPPPRAS (79 aa). Over residues 44–55 the composition is skewed to basic residues; that stretch reads NKRKRTGFRRKL. Residues 56–71 are compositionally biased toward low complexity; the sequence is PSGSPAAPVAVAASPS. An SWIRM domain is found at 88 to 189; the sequence is NREPTAEAVT…FGVAPAIKER (102 aa). 4 residues coordinate FAD: Glu227, Arg229, Arg235, and Glu609. The interval 790–811 is disordered; that stretch reads RNSSRTKTRPSKLKIGIPKSKS.

This sequence belongs to the flavin monoamine oxidase family. FAD is required as a cofactor.

In terms of biological role, probable histone demethylase. The sequence is that of Lysine-specific histone demethylase 1 homolog 3 from Oryza sativa subsp. japonica (Rice).